Consider the following 57-residue polypeptide: Conotoxin Cal6.34 (57 aa).

Positions 1–22 (MKLTCVLIVAVLILTACQVIAA) are cleaved as a signal peptide. 3 disulfide bridges follow: cysteine 26–cysteine 37, cysteine 29–cysteine 43, and cysteine 36–cysteine 54.

Belongs to the conotoxin O1 superfamily. In terms of tissue distribution, expressed by the venom duct.

The protein localises to the secreted. In terms of biological role, probable neurotoxin. The protein is Conotoxin Cal6.34 of Californiconus californicus (California cone).